We begin with the raw amino-acid sequence, 216 residues long: Urease accessory protein UreG (216 aa).

25-32 (GPVGSGKT) contacts GTP.

It belongs to the SIMIBI class G3E GTPase family. UreG subfamily. As to quaternary structure, homodimer. UreD, UreF and UreG form a complex that acts as a GTP-hydrolysis-dependent molecular chaperone, activating the urease apoprotein by helping to assemble the nickel containing metallocenter of UreC. The UreE protein probably delivers the nickel.

Its subcellular location is the cytoplasm. Its function is as follows. Facilitates the functional incorporation of the urease nickel metallocenter. This process requires GTP hydrolysis, probably effectuated by UreG. The protein is Urease accessory protein UreG of Burkholderia pseudomallei (strain 1710b).